Reading from the N-terminus, the 427-residue chain is Adenylosuccinate synthetase (427 aa).

GTP-binding positions include 12–18 (GDEGKGK) and 40–42 (GHT). The active-site Proton acceptor is the D13. 2 residues coordinate Mg(2+): D13 and G40. IMP contacts are provided by residues 13–16 (DEGK), 38–41 (NAGH), T128, R142, Q223, T238, and R302. H41 acts as the Proton donor in catalysis. 298 to 304 (VTTGRDR) contacts substrate. Residues R304, 330–332 (KLD), and 412–414 (GVG) contribute to the GTP site.

Belongs to the adenylosuccinate synthetase family. As to quaternary structure, homodimer. Mg(2+) is required as a cofactor.

It is found in the cytoplasm. It catalyses the reaction IMP + L-aspartate + GTP = N(6)-(1,2-dicarboxyethyl)-AMP + GDP + phosphate + 2 H(+). It participates in purine metabolism; AMP biosynthesis via de novo pathway; AMP from IMP: step 1/2. Its function is as follows. Plays an important role in the de novo pathway of purine nucleotide biosynthesis. Catalyzes the first committed step in the biosynthesis of AMP from IMP. This is Adenylosuccinate synthetase from Streptomyces coelicolor (strain ATCC BAA-471 / A3(2) / M145).